The primary structure comprises 163 residues: MMCTAKKCGIRFQPPAIILIYESEIKGKIRQRIMPVRNFSKFSDCTRAAEQLKNNPRHKSYLEQVSLRQLEKLFSFLRGYLSGQSLAETMEQIQRETTIDPEEDLNKLDDKELAKRKSIMDELFEKNQKKKDDPNFVYDIEVEFPQDDQLQSCGWDTESADEF.

The protein belongs to the CEP19 family. As to quaternary structure, interacts with CEP43; this interaction is required for its localization to the mother centriole. Interacts (via residues 121-150) with RABL2B. Interacts (via C-terminus) with CEP350; this interaction is required for its localization to the mother centriole.

The protein resides in the cytoplasm. It localises to the cytoskeleton. Its subcellular location is the microtubule organizing center. The protein localises to the centrosome. It is found in the centriole. The protein resides in the spindle pole. It localises to the cilium basal body. Required for ciliation. Recruits the RABL2B GTPase to the ciliary base to initiate ciliation. After specifically capturing the activated GTP-bound RABL2B, the CEP19-RABL2B complex binds intraflagellar transport (IFT) complex B from the large pool pre-docked at the base of the cilium and thus triggers its entry into the cilia. Involved in the early steps in cilia formation by recruiting the ciliary vesicles (CVs) to the distal end of the mother centriole where they fuse to initiate cilium assembly. Involved in microtubule (MT) anchoring to the centrosomes. The polypeptide is Centrosomal protein of 19 kDa (CEP19) (Homo sapiens (Human)).